A 411-amino-acid chain; its full sequence is Indian hedgehog protein (411 aa).

The signal sequence occupies residues 1–27; sequence MSPARLRPRLHFCLVLLLLLVVPAAWG. A lipid anchor (N-palmitoyl cysteine) is attached at Cys28. 7 residues coordinate Ca(2+): Glu94, Glu95, Asp100, Thr130, Glu131, Asp134, and Asp136. Residues His145, Asp152, and His187 each contribute to the Zn(2+) site. Residue Gly202 is the site of Cholesterol glycine ester attachment. Asn282 is a glycosylation site (N-linked (GlcNAc...) asparagine).

This sequence belongs to the hedgehog family. Multimer. As to quaternary structure, interacts with BOC and CDON. Interacts with PTCH1. Interacts with glypican GPC3. In terms of processing, cholesterylation is required for N-product targeting to lipid rafts and multimerization. The C-terminal domain displays an autoproteolysis activity and a cholesterol transferase activity. Both activities result in the cleavage of the full-length protein and covalent attachment of a cholesterol moiety to the C-terminal of the newly generated N-product. The N-product is the active species in both local and long-range signaling, whereas the C-product is degraded in the endoplasmic reticulum. Post-translationally, N-palmitoylation by HHAT of N-product is required for indian hedgehog protein N-product multimerization and full activity. Expressed in embryonic lung, and in adult kidney and liver.

Its subcellular location is the cell membrane. The protein localises to the endoplasmic reticulum membrane. It localises to the golgi apparatus membrane. It is found in the secreted. The catalysed reaction is glycyl-L-cysteinyl-[protein] + cholesterol + H(+) = [protein]-C-terminal glycyl cholesterol ester + N-terminal L-cysteinyl-[protein]. Functionally, plays a role in embryonic morphogenesis; it is involved in the regulation of endochondral skeleton formation, and the development of retinal pigment epithelium (RPE), photoreceptors and periocular tissues. The C-terminal part of the indian hedgehog protein precursor displays an autoproteolysis and a cholesterol transferase activity. Both activities result in the cleavage of the full-length protein into two parts followed by the covalent attachment of a cholesterol moiety to the C-terminal of the newly generated N-product. Both activities occur in the endoplasmic reticulum. Plays a role in hedgehog paracrine signaling. Associated with the very-low-density lipoprotein (VLDL) particles to function as a circulating morphogen for endothelial cell integrity maintenance. In terms of biological role, the dually lipidated indian hedgehog protein N-product is a morphogen which is essential for a variety of patterning events during development. Binds to the patched (PTCH1) receptor, which functions in association with smoothened (SMO), to activate the transcription of target genes. Plays a role in morphogenesis of the skeleton by coordinating growth and differentiation of the endochondral skeleton. Positively regulates PTHLH expression during endochondral bone formation preventing chondrocyte hypertrophy. In contrast, participates in normal chondrocyte proliferation in a PTHLH-independent pathway. The polypeptide is Indian hedgehog protein (Homo sapiens (Human)).